We begin with the raw amino-acid sequence, 239 residues long: Probable transcriptional regulatory protein BAA_0622 (239 aa).

This sequence belongs to the TACO1 family. YeeN subfamily.

The protein localises to the cytoplasm. This is Probable transcriptional regulatory protein BAA_0622 from Bacillus anthracis (strain A0248).